Here is a 395-residue protein sequence, read N- to C-terminus: Argininosuccinate synthase (395 aa).

ATP-binding positions include Ala10–Ser18 and Ala37. 2 residues coordinate L-citrulline: Tyr88 and Ser93. Position 118 (Gly118) interacts with ATP. Thr120, Asn124, and Asp125 together coordinate L-aspartate. Residue Asn124 participates in L-citrulline binding. Positions 128, 179, 188, 264, and 276 each coordinate L-citrulline.

It belongs to the argininosuccinate synthase family. Type 1 subfamily. Homotetramer.

The protein resides in the cytoplasm. The catalysed reaction is L-citrulline + L-aspartate + ATP = 2-(N(omega)-L-arginino)succinate + AMP + diphosphate + H(+). It functions in the pathway amino-acid biosynthesis; L-arginine biosynthesis; L-arginine from L-ornithine and carbamoyl phosphate: step 2/3. This chain is Argininosuccinate synthase, found in Pelagibacter ubique (strain HTCC1062).